A 128-amino-acid polypeptide reads, in one-letter code: SH2 domain-containing protein 1A (128 aa).

Positions 6–102 (VYHGKISRET…GIVIPLQYPV (97 aa)) constitute an SH2 domain. The tract at residues 67–92 (DTAPGVHKRFFRKIKNLISAFQKPDQ) is interaction with FYN SH3 domain. At K89 the chain carries N6-acetyllysine. Positions 103–128 (EKKSSARSTQGATGRREDPDVFLKTP) are disordered. Positions 116-128 (GRREDPDVFLKTP) are enriched in basic and acidic residues.

As to quaternary structure, interacts with CD84, CD244, LY9, SLAMF1 and FYN. Interacts with NTRK1, NTRK2 and NTRK3.

Its subcellular location is the cytoplasm. Its function is as follows. Cytoplasmic adapter regulating receptors of the signaling lymphocytic activation molecule (SLAM) family such as SLAMF1, CD244, LY9, CD84, SLAMF6 and SLAMF7. In SLAM signaling seems to cooperate with SH2D1B/EAT-2. Initially it has been proposed that association with SLAMF1 prevents SLAMF1 binding to inhibitory effectors including INPP5D/SHIP1 and PTPN11/SHP-2. However, by simultaneous interactions, recruits FYN which subsequently phosphorylates and activates SLAMF1. Positively regulates CD244/2B4- and CD84-mediated natural killer (NK) cell functions. Can also promote CD48-, SLAMF6 -, LY9-, and SLAMF7-mediated NK cell activation. In the context of NK cell-mediated cytotoxicity enhances conjugate formation with target cells. May also regulate the activity of the neurotrophin receptors NTRK1, NTRK2 and NTRK3. This chain is SH2 domain-containing protein 1A (SH2D1A), found in Sus scrofa (Pig).